Here is a 240-residue protein sequence, read N- to C-terminus: Orotidine 5'-phosphate decarboxylase (240 aa).

Substrate contacts are provided by residues aspartate 15, lysine 37, 64–73 (DLKYHDIPNT), threonine 127, arginine 188, glutamine 197, glycine 217, and arginine 218. Lysine 66 (proton donor) is an active-site residue.

It belongs to the OMP decarboxylase family. Type 1 subfamily. Homodimer.

The catalysed reaction is orotidine 5'-phosphate + H(+) = UMP + CO2. The protein operates within pyrimidine metabolism; UMP biosynthesis via de novo pathway; UMP from orotate: step 2/2. Functionally, catalyzes the decarboxylation of orotidine 5'-monophosphate (OMP) to uridine 5'-monophosphate (UMP). The chain is Orotidine 5'-phosphate decarboxylase from Geobacter sp. (strain M21).